The chain runs to 902 residues: Protein translocase subunit SecA (902 aa).

Residues Q85, 103 to 107 (GEGKT), and D492 contribute to the ATP site. Residues 846–902 (LSYSGGGEEPNQRPKSPRRRSERKIGPNEPCPCGSGKKFKKCHGRVGAPPLPTSQSQ) form a disordered region. C876, C878, C887, and H888 together coordinate Zn(2+).

Belongs to the SecA family. In terms of assembly, monomer and homodimer. Part of the essential Sec protein translocation apparatus which comprises SecA, SecYEG and auxiliary proteins SecDF. Other proteins may also be involved. The cofactor is Zn(2+).

Its subcellular location is the cell membrane. The protein localises to the cytoplasm. The enzyme catalyses ATP + H2O + cellular proteinSide 1 = ADP + phosphate + cellular proteinSide 2.. Its function is as follows. Part of the Sec protein translocase complex. Interacts with the SecYEG preprotein conducting channel. Has a central role in coupling the hydrolysis of ATP to the transfer of proteins into and across the cell membrane, serving as an ATP-driven molecular motor driving the stepwise translocation of polypeptide chains across the membrane. This Rubrobacter xylanophilus (strain DSM 9941 / JCM 11954 / NBRC 16129 / PRD-1) protein is Protein translocase subunit SecA.